A 364-amino-acid chain; its full sequence is Threonine-phosphate decarboxylase (364 aa).

O-phospho-L-threonine is bound by residues 8–9, N32, and N157; that span reads HG. N6-(pyridoxal phosphate)lysine is present on K216. Positions 323 and 337 each coordinate O-phospho-L-threonine.

The protein belongs to the class-II pyridoxal-phosphate-dependent aminotransferase family. As to quaternary structure, homodimer. The cofactor is pyridoxal 5'-phosphate.

It carries out the reaction O-phospho-L-threonine + H(+) = (R)-1-aminopropan-2-yl phosphate + CO2. The protein operates within cofactor biosynthesis; adenosylcobalamin biosynthesis. Its function is as follows. Decarboxylates L-threonine-O-3-phosphate to yield (R)-1-amino-2-propanol O-2-phosphate, the precursor for the linkage between the nucleotide loop and the corrin ring in cobalamin. This is Threonine-phosphate decarboxylase (cobD) from Salmonella typhimurium (strain LT2 / SGSC1412 / ATCC 700720).